A 156-amino-acid chain; its full sequence is uncharacterized protein (156 aa).

It to L.lactis TrpF C-terminal region.

This is an uncharacterized protein from Bacillus subtilis (strain 168).